We begin with the raw amino-acid sequence, 267 residues long: Enolase-phosphatase E1 (267 aa).

Mg(2+)-binding residues include D11 and E13. Substrate contacts are provided by residues 155–156 (SS) and K189. D215 lines the Mg(2+) pocket.

The protein belongs to the HAD-like hydrolase superfamily. MasA/MtnC family. Monomer. Requires Mg(2+) as cofactor.

Its subcellular location is the cytoplasm. The protein localises to the nucleus. The catalysed reaction is 5-methylsulfanyl-2,3-dioxopentyl phosphate + H2O = 1,2-dihydroxy-5-(methylsulfanyl)pent-1-en-3-one + phosphate. It functions in the pathway amino-acid biosynthesis; L-methionine biosynthesis via salvage pathway; L-methionine from S-methyl-5-thio-alpha-D-ribose 1-phosphate: step 3/6. It participates in amino-acid biosynthesis; L-methionine biosynthesis via salvage pathway; L-methionine from S-methyl-5-thio-alpha-D-ribose 1-phosphate: step 4/6. In terms of biological role, bifunctional enzyme that catalyzes the enolization of 2,3-diketo-5-methylthiopentyl-1-phosphate (DK-MTP-1-P) into the intermediate 2-hydroxy-3-keto-5-methylthiopentenyl-1-phosphate (HK-MTPenyl-1-P), which is then dephosphorylated to form the acireductone 1,2-dihydroxy-3-keto-5-methylthiopentene (DHK-MTPene). The protein is Enolase-phosphatase E1 (enoph1) of Dictyostelium discoideum (Social amoeba).